Consider the following 360-residue polypeptide: Photosystem II protein D1 3 (360 aa).

The next 3 membrane-spanning stretches (helical) occupy residues 29-46 (YVGW…AATV), 118-133 (HFLI…QWEL), and 142-156 (WICV…SATA). Histidine 118 contributes to the chlorophyll a binding site. Tyrosine 126 serves as a coordination point for pheophytin a. 2 residues coordinate [CaMn4O5] cluster: aspartate 170 and glutamate 189. The chain crosses the membrane as a helical span at residues 197–218 (FHMLGVAGVFGGSLFSAMHGSL). Position 198 (histidine 198) interacts with chlorophyll a. Residues histidine 215 and 264 to 265 (SF) each bind a quinone. Residue histidine 215 participates in Fe cation binding. Histidine 272 contacts Fe cation. Residues 274–288 (FLAAWPVIGIWFTAL) traverse the membrane as a helical segment. Positions 332, 333, 342, and 344 each coordinate [CaMn4O5] cluster. A propeptide spanning residues 345 to 360 (AGEVAPVALTAPAING) is cleaved from the precursor.

The protein belongs to the reaction center PufL/M/PsbA/D family. PSII is composed of 1 copy each of membrane proteins PsbA, PsbB, PsbC, PsbD, PsbE, PsbF, PsbH, PsbI, PsbJ, PsbK, PsbL, PsbM, PsbT, PsbX, PsbY, PsbZ, Psb30/Ycf12, peripheral proteins PsbO, CyanoQ (PsbQ), PsbU, PsbV and a large number of cofactors. It forms dimeric complexes. The D1/D2 heterodimer binds P680, chlorophylls that are the primary electron donor of PSII, and subsequent electron acceptors. It shares a non-heme iron and each subunit binds pheophytin, quinone, additional chlorophylls, carotenoids and lipids. D1 provides most of the ligands for the Mn4-Ca-O5 cluster of the oxygen-evolving complex (OEC). There is also a Cl(-1) ion associated with D1 and D2, which is required for oxygen evolution. The PSII complex binds additional chlorophylls, carotenoids and specific lipids. is required as a cofactor. Post-translationally, tyr-161 forms a radical intermediate that is referred to as redox-active TyrZ, YZ or Y-Z. C-terminally processed by CtpA; processing is essential to allow assembly of the oxygen-evolving complex and thus photosynthetic growth.

The protein resides in the cellular thylakoid membrane. It catalyses the reaction 2 a plastoquinone + 4 hnu + 2 H2O = 2 a plastoquinol + O2. Its function is as follows. Photosystem II (PSII) is a light-driven water:plastoquinone oxidoreductase that uses light energy to abstract electrons from H(2)O, generating O(2) and a proton gradient subsequently used for ATP formation. It consists of a core antenna complex that captures photons, and an electron transfer chain that converts photonic excitation into a charge separation. The D1/D2 (PsbA/PsbD) reaction center heterodimer binds P680, the primary electron donor of PSII as well as several subsequent electron acceptors. This chain is Photosystem II protein D1 3, found in Trichormus variabilis (strain ATCC 29413 / PCC 7937) (Anabaena variabilis).